A 382-amino-acid polypeptide reads, in one-letter code: Dodecanoyl-[acyl-carrier-protein] hydrolase, chloroplastic (382 aa).

A chloroplast-targeting transit peptide spans 1–83 (MATTSLASAF…FSAAEKQWTN (83 aa)). Catalysis depends on residues asparagine 283, histidine 285, and cysteine 320.

Belongs to the acyl-ACP thioesterase family.

The protein localises to the plastid. Its subcellular location is the chloroplast. The enzyme catalyses dodecanoyl-[ACP] + H2O = dodecanoate + holo-[ACP] + H(+). Its function is as follows. Plays an essential role in chain termination during de novo fatty acid synthesis. High thioesterase activity for myristoyl-ACP. This is Dodecanoyl-[acyl-carrier-protein] hydrolase, chloroplastic from Cinnamomum camphora (Camphor tree).